The chain runs to 104 residues: Large ribosomal subunit protein uL23 (104 aa).

The protein belongs to the universal ribosomal protein uL23 family. In terms of assembly, part of the 50S ribosomal subunit. Contacts protein L29, and trigger factor when it is bound to the ribosome.

Functionally, one of the early assembly proteins it binds 23S rRNA. One of the proteins that surrounds the polypeptide exit tunnel on the outside of the ribosome. Forms the main docking site for trigger factor binding to the ribosome. The protein is Large ribosomal subunit protein uL23 of Leptospira interrogans serogroup Icterohaemorrhagiae serovar copenhageni (strain Fiocruz L1-130).